A 711-amino-acid polypeptide reads, in one-letter code: DNA topoisomerase 1 (711 aa).

One can recognise a Toprim domain in the interval 3–134 (KNLVVIESPN…KCQRITFNEI (132 aa)). Mg(2+) contacts are provided by Glu9 and Asp102. The region spanning 150-604 (DQSWVQSQFA…FWSNFKEEVK (455 aa)) is the Topo IA-type catalytic domain. The interval 183-188 (SAGRVQ) is interaction with DNA. Catalysis depends on Tyr340, which acts as the O-(5'-phospho-DNA)-tyrosine intermediate. 2 consecutive C4-type zinc fingers follow at residues 624-652 (CPSC…FPNC) and 673-702 (CPEC…FPRC).

This sequence belongs to the type IA topoisomerase family. As to quaternary structure, monomer. Mg(2+) serves as cofactor.

It catalyses the reaction ATP-independent breakage of single-stranded DNA, followed by passage and rejoining.. Its function is as follows. Releases the supercoiling and torsional tension of DNA, which is introduced during the DNA replication and transcription, by transiently cleaving and rejoining one strand of the DNA duplex. Introduces a single-strand break via transesterification at a target site in duplex DNA. The scissile phosphodiester is attacked by the catalytic tyrosine of the enzyme, resulting in the formation of a DNA-(5'-phosphotyrosyl)-enzyme intermediate and the expulsion of a 3'-OH DNA strand. The free DNA strand then undergoes passage around the unbroken strand, thus removing DNA supercoils. Finally, in the religation step, the DNA 3'-OH attacks the covalent intermediate to expel the active-site tyrosine and restore the DNA phosphodiester backbone. In Mycoplasma pneumoniae (strain ATCC 29342 / M129 / Subtype 1) (Mycoplasmoides pneumoniae), this protein is DNA topoisomerase 1.